The primary structure comprises 319 residues: Biotin synthase (319 aa).

The Radical SAM core domain occupies 41–267 (YKGNKVKVCS…TPDIMICGGR (227 aa)). Positions 59, 63, and 66 each coordinate [4Fe-4S] cluster. Cys-192 provides a ligand contact to [2Fe-2S] cluster.

This sequence belongs to the radical SAM superfamily. Biotin synthase family. In terms of assembly, homodimer. Requires [4Fe-4S] cluster as cofactor. The cofactor is [2Fe-2S] cluster.

The catalysed reaction is (4R,5S)-dethiobiotin + (sulfur carrier)-SH + 2 reduced [2Fe-2S]-[ferredoxin] + 2 S-adenosyl-L-methionine = (sulfur carrier)-H + biotin + 2 5'-deoxyadenosine + 2 L-methionine + 2 oxidized [2Fe-2S]-[ferredoxin]. The protein operates within cofactor biosynthesis; biotin biosynthesis; biotin from 7,8-diaminononanoate: step 2/2. In terms of biological role, catalyzes the conversion of dethiobiotin (DTB) to biotin by the insertion of a sulfur atom into dethiobiotin via a radical-based mechanism. This Endomicrobium trichonymphae protein is Biotin synthase.